Consider the following 614-residue polypeptide: Probable ATP-dependent RNA helicase DDX5 (614 aa).

Basic and acidic residues predominate over residues 1–15; that stretch reads MSSYSSDRDRGRDRG. Residues 1-39 form a disordered region; that stretch reads MSSYSSDRDRGRDRGFGAPRFGGSRTGPLSGKKFGNPGE. Serine 24 bears the Phosphoserine mark. Lysine 32 is subject to N6-acetyllysine; alternate. A Glycyl lysine isopeptide (Lys-Gly) (interchain with G-Cter in SUMO2); alternate cross-link involves residue lysine 32. N6-acetyllysine occurs at positions 33 and 40. Residue lysine 45 forms a Glycyl lysine isopeptide (Lys-Gly) (interchain with G-Cter in SUMO2) linkage. Lysine 53 participates in a covalent cross-link: Glycyl lysine isopeptide (Lys-Gly) (interchain with G-Cter in SUMO2); alternate. A Glycyl lysine isopeptide (Lys-Gly) (interchain with G-Cter in SUMO); alternate cross-link involves residue lysine 53. Residue lysine 53 forms a Glycyl lysine isopeptide (Lys-Gly) (interchain with G-Cter in SUMO1); alternate linkage. The Q motif signature appears at 94-122; sequence LNFYEANFPANVMDVIARQNFTEPTAIQA. ATP is bound by residues 114–116, glutamine 121, and 138–145; these read FTE and AQTGSGKT. The region spanning 125-300 is the Helicase ATP-binding domain; that stretch reads WPVALSGLDM…EDFLKDYIHI (176 aa). Position 236 is an N6-acetyllysine (lysine 236). The DEAD box motif lies at 248 to 251; that stretch reads DEAD. Position 297 is a phosphotyrosine (tyrosine 297). The Helicase C-terminal domain occupies 328–475; sequence KLIRLMEEIM…AINPKLLQLV (148 aa). Residues lysine 340, lysine 343, lysine 388, lysine 391, lysine 411, lysine 437, lysine 451, and lysine 470 each participate in a glycyl lysine isopeptide (Lys-Gly) (interchain with G-Cter in SUMO2) cross-link. Positions 477-504 are disordered; sequence DRGSGRSRGRGGMKDDRRDRYSAGKRGG. The segment at 477-614 is transactivation domain; that stretch reads DRGSGRSRGR…GYPMPTGYSQ (138 aa). A Phosphoserine modification is found at serine 480. The segment covering 488–498 has biased composition (basic and acidic residues); it reads GMKDDRRDRYS. Residue lysine 523 forms a Glycyl lysine isopeptide (Lys-Gly) (interchain with G-Cter in SUMO2) linkage.

The protein belongs to the DEAD box helicase family. DDX5/DBP2 subfamily. In terms of assembly, identified in the spliceosome C complex. Component of a ribonucleoprotein complex containing mRNAs and RNA-binding proteins including DDX5, HNRNPH2 and SRSF1 as well as splicing regulator ARVCF. Interacts with RBM4; the interaction occurs in an RNA-independent manner. Interacts with AGO1 and AGO2. Interacts with ESR1, AR, EP300, CREBBP, POLR2A, TP53, RUNX2 and HDAC1. Self-associates. Interacts with DDX17. Interacts with BRDT. The large PER complex involved in the repression of transcriptional termination is composed of at least PER2, CDK9, DDX5, DHX9, NCBP1 and POLR2A (active). Interacts with DHX36; this interaction occurs in a RNA-dependent manner. Interacts with NUPR1. Interacts with ERCC6. Interacts with DDX3X in the cytoplasm; this interaction may be more efficient when both proteins are unphosphorylated. In terms of processing, sumoylated; sumoylation, promoted by PIAS1, promotes interaction with HDAC1 and transcriptional repression activity. Sumoylation also significantly increases stability, and reduces polyubiquitination. Post-translationally, polyubiquitinated, leading to proteasomal degradation. Weakly phosphorylated in the G1/S phase of the cell cycle and much more at G2/M, especially at Thr and Tyr residues.

It localises to the nucleus. It is found in the nucleolus. The protein resides in the cytoplasm. The enzyme catalyses ATP + H2O = ADP + phosphate + H(+). Involved in the alternative regulation of pre-mRNA splicing; its RNA helicase activity is necessary for increasing tau exon 10 inclusion and occurs in a RBM4-dependent manner. Binds to the tau pre-mRNA in the stem-loop region downstream of exon 10. The rate of ATP hydrolysis is highly stimulated by single-stranded RNA. Involved in transcriptional regulation; the function is independent of the RNA helicase activity. Transcriptional coactivator for androgen receptor AR but probably not ESR1. Synergizes with DDX17 and SRA1 RNA to activate MYOD1 transcriptional activity and involved in skeletal muscle differentiation. Transcriptional coactivator for p53/TP53 and involved in p53/TP53 transcriptional response to DNA damage and p53/TP53-dependent apoptosis. Transcriptional coactivator for RUNX2 and involved in regulation of osteoblast differentiation. Acts as a transcriptional repressor in a promoter-specific manner; the function probably involves association with histone deacetylases, such as HDAC1. As component of a large PER complex is involved in the inhibition of 3' transcriptional termination of circadian target genes such as PER1 and NR1D1 and the control of the circadian rhythms. This is Probable ATP-dependent RNA helicase DDX5 (Ddx5) from Mus musculus (Mouse).